The chain runs to 346 residues: Probable electron transfer flavoprotein subunit alpha, mitochondrial (346 aa).

An FAD-binding site is contributed by 285 to 313; the sequence is LYVAIGISGAIQHLAGMKESKMIIAINKD.

Belongs to the ETF alpha-subunit/FixB family. In terms of assembly, heterodimer of an alpha and a beta subunit. FAD is required as a cofactor.

The protein resides in the mitochondrion matrix. Its function is as follows. The electron transfer flavoprotein serves as a specific electron acceptor for several dehydrogenases, including five acyl-CoA dehydrogenases, glutaryl-CoA and sarcosine dehydrogenase. It transfers the electrons to the main mitochondrial respiratory chain via ETF-ubiquinone oxidoreductase (ETF dehydrogenase). This is Probable electron transfer flavoprotein subunit alpha, mitochondrial (ETF1) from Cryptococcus neoformans var. neoformans serotype D (strain B-3501A) (Filobasidiella neoformans).